Here is a 51-residue protein sequence, read N- to C-terminus: U-Asilidin(1)-Eru1a (51 aa).

Positions 1 to 23 are cleaved as a signal peptide; that stretch reads MANYIDVLSFLAIICATVLATLA. 3 cysteine pairs are disulfide-bonded: Cys26–Cys40, Cys33–Cys44, and Cys39–Cys49.

The protein belongs to the asilidin-1 family. In terms of tissue distribution, expressed by the venom gland. The most highly expressed peptides U-Asilidin1-Mar1a is around 3000 times higher expressed in the venom thoracic glands compared to its body tissues.

The protein localises to the secreted. Its function is as follows. Induces neurotoxic effect on honeybees, including slow movements, disorientation and paralysis. Since it provokes similar symptoms than omega-atracotoxin, it is probable that it acts in the same way by inhibiting voltage-gated calcium channels. This Eutolmus rufibarbis (Golden-tabbed robberfly) protein is U-Asilidin(1)-Eru1a.